A 377-amino-acid polypeptide reads, in one-letter code: Chaperone protein DnaJ (377 aa).

One can recognise a J domain in the interval 5-70 (DFYEVLGVDR…EKRSAYDRMG (66 aa)). The CR-type zinc finger occupies 136 to 214 (GCKKEISFTA…CHGTGVKDKS (79 aa)). Zn(2+)-binding residues include Cys-149, Cys-152, Cys-166, Cys-169, Cys-188, Cys-191, Cys-202, and Cys-205. 4 CXXCXGXG motif repeats span residues 149 to 156 (CETCDGKG), 166 to 173 (CSTCGGHG), 188 to 195 (CPNCGGSG), and 202 to 209 (CNDCHGTG). The tract at residues 353-377 (LDGDSKHHQSPKKKSFFEKLGDLFD) is disordered. Over residues 367–377 (SFFEKLGDLFD) the composition is skewed to basic and acidic residues.

Belongs to the DnaJ family. As to quaternary structure, homodimer. Zn(2+) is required as a cofactor.

It localises to the cytoplasm. In terms of biological role, participates actively in the response to hyperosmotic and heat shock by preventing the aggregation of stress-denatured proteins and by disaggregating proteins, also in an autonomous, DnaK-independent fashion. Unfolded proteins bind initially to DnaJ; upon interaction with the DnaJ-bound protein, DnaK hydrolyzes its bound ATP, resulting in the formation of a stable complex. GrpE releases ADP from DnaK; ATP binding to DnaK triggers the release of the substrate protein, thus completing the reaction cycle. Several rounds of ATP-dependent interactions between DnaJ, DnaK and GrpE are required for fully efficient folding. Also involved, together with DnaK and GrpE, in the DNA replication of plasmids through activation of initiation proteins. This chain is Chaperone protein DnaJ, found in Psychrobacter sp. (strain PRwf-1).